The following is a 765-amino-acid chain: Putative U-box domain-containing protein 50 (765 aa).

A coiled-coil region spans residues 198-391; it reads QEIENYFQQL…NRRIEFCKER (194 aa). The region spanning 422–765 is the Protein kinase domain; it reads SDRLRLKSGG…HSKRAAQASS (344 aa). ATP contacts are provided by residues 428–436 and Lys-449; that span reads KSGGNWTNV. The region spanning 688–762 is the U-box domain; the sequence is DIPSVFMCPI…QDWHSKRAAQ (75 aa).

This sequence belongs to the protein kinase superfamily. Ser/Thr protein kinase family.

The catalysed reaction is S-ubiquitinyl-[E2 ubiquitin-conjugating enzyme]-L-cysteine + [acceptor protein]-L-lysine = [E2 ubiquitin-conjugating enzyme]-L-cysteine + N(6)-ubiquitinyl-[acceptor protein]-L-lysine.. It functions in the pathway protein modification; protein ubiquitination. In terms of biological role, functions as an E3 ubiquitin ligase. In Arabidopsis thaliana (Mouse-ear cress), this protein is Putative U-box domain-containing protein 50 (PUB50).